The following is a 179-amino-acid chain: Ribosome maturation factor RimP (179 aa).

This sequence belongs to the RimP family.

It localises to the cytoplasm. In terms of biological role, required for maturation of 30S ribosomal subunits. In Chlorobium chlorochromatii (strain CaD3), this protein is Ribosome maturation factor RimP.